Here is a 436-residue protein sequence, read N- to C-terminus: 3-ketoacyl-CoA thiolase (436 aa).

Residue cysteine 99 is the Acyl-thioester intermediate of the active site. Active-site proton acceptor residues include histidine 392 and cysteine 422.

This sequence belongs to the thiolase-like superfamily. Thiolase family. Heterotetramer of two alpha chains (FadJ) and two beta chains (FadI).

The protein localises to the cytoplasm. The catalysed reaction is an acyl-CoA + acetyl-CoA = a 3-oxoacyl-CoA + CoA. It functions in the pathway lipid metabolism; fatty acid beta-oxidation. Functionally, catalyzes the final step of fatty acid oxidation in which acetyl-CoA is released and the CoA ester of a fatty acid two carbons shorter is formed. This is 3-ketoacyl-CoA thiolase from Alteromonas mediterranea (strain DSM 17117 / CIP 110805 / LMG 28347 / Deep ecotype).